Reading from the N-terminus, the 205-residue chain is MREFIFKANKTITSSDINLKDLPGSCGRLDLLCRCVSDAFFLSHDIRRDVVFYAVLYGQPNPPVCIKFVGSELKKVSPDERNIAIFIKKALKKFEELDEEQRKDWNQSTPGIYVRRLGFRNLVLEKLEEGKNIYYLHMNGEDVENVDIENPVFIIGDHIGIGEEDERFLDEIKAKRISLSPLELHANHCITIIHNVLDKKRICEI.

Residues leucine 136, glycine 156, 179-184 (LSPLEL), and cysteine 189 each bind S-adenosyl-L-methionine.

The protein belongs to the methyltransferase superfamily. TrmY family. In terms of assembly, homodimer.

The protein localises to the cytoplasm. It catalyses the reaction pseudouridine(54) in tRNA + S-adenosyl-L-methionine = N(1)-methylpseudouridine(54) in tRNA + S-adenosyl-L-homocysteine + H(+). Its function is as follows. Specifically catalyzes the N1-methylation of pseudouridine at position 54 (Psi54) in tRNAs. This Methanocaldococcus jannaschii (strain ATCC 43067 / DSM 2661 / JAL-1 / JCM 10045 / NBRC 100440) (Methanococcus jannaschii) protein is tRNA (pseudouridine(54)-N(1))-methyltransferase.